A 229-amino-acid chain; its full sequence is Elongation factor 1-delta 1 (229 aa).

Residues 80–109 (ESTAVPSASTPDVADAKAPAADDDDDDDVD) form a disordered region. Positions 100-109 (ADDDDDDDVD) are enriched in acidic residues.

The protein belongs to the EF-1-beta/EF-1-delta family. In terms of assembly, EF-1 is composed of 4 subunits: alpha, beta (1B-alpha=beta'), delta (1B-beta), and gamma (1B-gamma).

In terms of biological role, EF-1-beta and EF-1-beta' stimulate the exchange of GDP bound to EF-1-alpha to GTP. The protein is Elongation factor 1-delta 1 of Oryza sativa subsp. japonica (Rice).